Consider the following 92-residue polypeptide: Large ribosomal subunit protein eL43z (92 aa).

The C4-type zinc-finger motif lies at Cys39–Cys60.

Belongs to the eukaryotic ribosomal protein eL43 family.

This chain is Large ribosomal subunit protein eL43z, found in Oryza sativa subsp. japonica (Rice).